Consider the following 404-residue polypeptide: Glycerol-1-phosphate dehydrogenase [NAD(P)+] (404 aa).

NAD(+) is bound by residues aspartate 56, 118–122 (GTIHD), and 140–143 (TAPS). Aspartate 145 is a substrate binding site. Position 149 (serine 149) interacts with NAD(+). A substrate-binding site is contributed by aspartate 192. Ni(2+)-binding residues include aspartate 192 and histidine 272. Substrate is bound at residue histidine 276. Histidine 292 contributes to the Ni(2+) binding site.

Belongs to the glycerol-1-phosphate dehydrogenase family. Homodimer. Ni(2+) serves as cofactor.

It localises to the cytoplasm. It carries out the reaction sn-glycerol 1-phosphate + NAD(+) = dihydroxyacetone phosphate + NADH + H(+). The catalysed reaction is sn-glycerol 1-phosphate + NADP(+) = dihydroxyacetone phosphate + NADPH + H(+). Functionally, catalyzes the NAD(P)H-dependent reduction of dihydroxyacetonephosphate (DHAP or glycerone phosphate) to glycerol 1-phosphate (G1P). The G1P thus generated is probably used for the synthesis of phosphoglycerolipids in Gram-positive bacterial species. This is Glycerol-1-phosphate dehydrogenase [NAD(P)+] from Geobacillus stearothermophilus (Bacillus stearothermophilus).